The chain runs to 754 residues: Glutathione biosynthesis bifunctional protein GshAB (754 aa).

Residues 1–333 (MHINQLLQHA…KAQKLNDKIA (333 aa)) are glutamate--cysteine ligase. In terms of domain architecture, ATP-grasp spans 489-752 (KKILRENGYP…LAKLFPEIST (264 aa)). Residue 516-574 (SQIKNKPIVVKPKTTNFGLGISIFETAASHNDYEKALDIAFIEDYSVLVEEFIPGTEYR) coordinates ATP. The Mg(2+) site is built by D696, E717, and N719. Residues D696, E717, and N719 each contribute to the Mn(2+) site.

This sequence in the N-terminal section; belongs to the glutamate--cysteine ligase type 1 family. Type 2 subfamily. As to quaternary structure, monomer. Requires Mg(2+) as cofactor. The cofactor is Mn(2+).

It catalyses the reaction L-cysteine + L-glutamate + ATP = gamma-L-glutamyl-L-cysteine + ADP + phosphate + H(+). The enzyme catalyses gamma-L-glutamyl-L-cysteine + glycine + ATP = glutathione + ADP + phosphate + H(+). It functions in the pathway sulfur metabolism; glutathione biosynthesis; glutathione from L-cysteine and L-glutamate: step 1/2. It participates in sulfur metabolism; glutathione biosynthesis; glutathione from L-cysteine and L-glutamate: step 2/2. In terms of biological role, synthesizes glutathione from L-glutamate and L-cysteine via gamma-L-glutamyl-L-cysteine. The sequence is that of Glutathione biosynthesis bifunctional protein GshAB from Streptococcus mutans serotype c (strain ATCC 700610 / UA159).